Reading from the N-terminus, the 126-residue chain is Small ribosomal subunit protein eS8 (126 aa).

The segment covering 1-10 (MAIWQGSSLR) has biased composition (polar residues). The tract at residues 1 to 35 (MAIWQGSSLRKPSGARSRRNKNKRNAEFGRNPAET) is disordered.

It belongs to the eukaryotic ribosomal protein eS8 family. As to quaternary structure, part of the 30S ribosomal subunit.

This chain is Small ribosomal subunit protein eS8, found in Methanosphaera stadtmanae (strain ATCC 43021 / DSM 3091 / JCM 11832 / MCB-3).